Reading from the N-terminus, the 180-residue chain is Large ribosomal subunit protein uL5 (180 aa).

The protein belongs to the universal ribosomal protein uL5 family. Part of the 50S ribosomal subunit; part of the 5S rRNA/L5/L18/L25 subcomplex. Contacts the 5S rRNA and the P site tRNA. Forms a bridge to the 30S subunit in the 70S ribosome.

Functionally, this is one of the proteins that bind and probably mediate the attachment of the 5S RNA into the large ribosomal subunit, where it forms part of the central protuberance. In the 70S ribosome it contacts protein S13 of the 30S subunit (bridge B1b), connecting the 2 subunits; this bridge is implicated in subunit movement. Contacts the P site tRNA; the 5S rRNA and some of its associated proteins might help stabilize positioning of ribosome-bound tRNAs. The sequence is that of Large ribosomal subunit protein uL5 from Streptococcus suis (strain 05ZYH33).